A 562-amino-acid polypeptide reads, in one-letter code: Tissue-type plasminogen activator (562 aa).

The N-terminal stretch at 1-19 is a signal peptide; that stretch reads MYALKRELWCVLLLCGAIC. Residues 20 to 32 constitute a propeptide that is removed on maturation; that stretch reads TSPSQETHRRLRR. Residues 33–35 constitute a propeptide, removed by plasmin; the sequence is GVR. The Fibronectin type-I domain occupies 39 to 81; sequence VTCRDEKTQMIYQQHQSWLRPLLRGNRVEHCWCNDGQTQCHSV. 17 disulfides stabilise this stretch: cysteine 41-cysteine 71, cysteine 69-cysteine 78, cysteine 86-cysteine 97, cysteine 91-cysteine 108, cysteine 110-cysteine 119, cysteine 127-cysteine 208, cysteine 148-cysteine 190, cysteine 179-cysteine 203, cysteine 215-cysteine 296, cysteine 236-cysteine 278, cysteine 267-cysteine 291, cysteine 299-cysteine 430, cysteine 342-cysteine 358, cysteine 350-cysteine 419, cysteine 444-cysteine 519, cysteine 476-cysteine 492, and cysteine 509-cysteine 537. Residues 42 to 52 form an important for binding to annexin A2 region; it reads RDEKTQMIYQQ. Residues 82–120 enclose the EGF-like domain; sequence PVKSCSEPRCFNGGTCLQAIYFSDFVCQCPVGFIGRQCE. The O-linked (Fuc) threonine glycan is linked to threonine 96. Kringle domains are found at residues 126–208 and 214–296; these read TCYE…TPAC and ECYT…LPQC. N-linked (GlcNAc...) asparagine glycosylation occurs at asparagine 152. Positions 311-561 constitute a Peptidase S1 domain; the sequence is IKGGLYADIT…YLNWIRDNTR (251 aa). Active-site charge relay system residues include histidine 357 and aspartate 406. The N-linked (GlcNAc...) asparagine glycan is linked to asparagine 483. Residue serine 513 is the Charge relay system of the active site.

Belongs to the peptidase S1 family. In terms of assembly, heterodimer of chain A and chain B held by a disulfide bond. Binds to fibrin with high affinity. This interaction leads to an increase in the catalytic efficiency of the enzyme due to an increase in affinity for plasminogen. Similarly, binding to heparin increases the activation of plasminogen. Binds to annexin A2, cytokeratin-8, fibronectin and laminin. Binds to mannose receptor and the low-density lipoprotein receptor-related protein (LRP1); these proteins are involved in TPA clearance. Binds LRP1B; binding is followed by internalization and degradation. Forms heterodimer with SERPINA5. Interacts with SERPINE1. In complex with SERPINE1, interacts with SORL1. The single chain, almost fully active enzyme, can be further processed into a two-chain fully active form by a cleavage after Arg-310 catalyzed by plasmin, tissue kallikrein or factor Xa.

The protein localises to the secreted. It localises to the extracellular space. The enzyme catalyses Specific cleavage of Arg-|-Val bond in plasminogen to form plasmin.. With respect to regulation, inhibited by SERPINA5. Inhibited by SERPINE1. Converts the abundant, but inactive, zymogen plasminogen to plasmin by hydrolyzing a single Arg-Val bond in plasminogen. By controlling plasmin-mediated proteolysis, it plays an important role in tissue remodeling and degradation, in cell migration and many other physiopathological events. During oocyte activation, plays a role in cortical granule reaction in the zona reaction, which contributes to the block to polyspermy. The sequence is that of Tissue-type plasminogen activator (PLAT) from Sus scrofa (Pig).